Here is a 68-residue protein sequence, read N- to C-terminus: uncharacterized protein (68 aa).

The disordered stretch occupies residues 1–68 (METIIRRFSP…GNSKNIKTKK (68 aa)). Residues 9–34 (SPKEKEKEKEKEEKDEKSKDKKEPIK) show a composition bias toward basic and acidic residues. The segment covering 42–51 (DEEEEEDEQE) has biased composition (acidic residues).

This is an uncharacterized protein from Dictyostelium discoideum (Social amoeba).